A 946-amino-acid chain; its full sequence is Serine/arginine repetitive matrix protein 1 (946 aa).

The residue at position 1 (methionine 1) is an N-acetylmethionine. The tract at residues methionine 1–lysine 151 is necessary for DNA and RNA-binding. A necessary for mRNA 3'-end cleavage and cytoplasmic accumulation region spans residues methionine 1–lysine 156. Arginine 7 carries the citrulline modification. The 100-residue stretch at glutamine 27 to leucine 126 folds into the PWI domain. A Glycyl lysine isopeptide (Lys-Gly) (interchain with G-Cter in SUMO2) cross-link involves residue lysine 127. At lysine 140 the chain carries N6-acetyllysine. A compositionally biased stretch (basic and acidic residues) spans alanine 142 to arginine 170. The tract at residues alanine 142–serine 946 is disordered. Basic residues predominate over residues serine 171–serine 207. The segment covering proline 214 to serine 234 has biased composition (basic and acidic residues). A phosphoserine mark is found at serine 220 and serine 227. Lysine 231 participates in a covalent cross-link: Glycyl lysine isopeptide (Lys-Gly) (interchain with G-Cter in SUMO1); alternate. Lysine 231 is covalently cross-linked (Glycyl lysine isopeptide (Lys-Gly) (interchain with G-Cter in SUMO2); alternate). 2 positions are modified to phosphoserine: serine 234 and serine 240. A Phosphothreonine modification is found at threonine 241. Positions lysine 246 to arginine 273 are enriched in basic and acidic residues. Lysine 249 is covalently cross-linked (Glycyl lysine isopeptide (Lys-Gly) (interchain with G-Cter in SUMO2)). Serine 260 is subject to Phosphoserine. 2 stretches are compositionally biased toward basic residues: residues proline 274–proline 327 and proline 334–serine 349. Positions arginine 298 to proline 707 are necessary for speckles and matrix localization. Residues serine 350–arginine 366 show a composition bias toward low complexity. Serine 387, serine 389, serine 391, and serine 400 each carry phosphoserine. Threonine 404 carries the post-translational modification Phosphothreonine. Serine 412 is modified (phosphoserine). Phosphothreonine is present on threonine 414. 4 positions are modified to phosphoserine: serine 418, serine 427, serine 429, and serine 434. Residues valine 426–lysine 436 are compositionally biased toward polar residues. Lysine 445 is covalently cross-linked (Glycyl lysine isopeptide (Lys-Gly) (interchain with G-Cter in SUMO2)). A phosphoserine mark is found at serine 448 and serine 450. Lysine 457 participates in a covalent cross-link: Glycyl lysine isopeptide (Lys-Gly) (interchain with G-Cter in SUMO2). 2 positions are modified to phosphoserine: serine 461 and serine 463. Lysine 470 participates in a covalent cross-link: Glycyl lysine isopeptide (Lys-Gly) (interchain with G-Cter in SUMO2). Serine 476 is subject to Phosphoserine. Low complexity predominate over residues serine 476–threonine 499. Residues glutamate 501 to glycine 516 show a composition bias toward basic and acidic residues. Phosphoserine occurs at positions 522, 524, 526, 528, 530, 561, 563, 572, and 574. Positions serine 555–serine 572 are enriched in basic residues. Over residues serine 574–proline 585 the composition is skewed to pro residues. The segment covering proline 586–serine 611 has biased composition (basic residues). Threonine 593 and threonine 600 each carry phosphothreonine. Serine 602 is subject to Phosphoserine. Positions proline 612–serine 624 are enriched in low complexity. At tyrosine 615 the chain carries Phosphotyrosine. Phosphoserine occurs at positions 616, 624, and 626. The residue at position 633 (threonine 633) is a Phosphothreonine. Phosphoserine is present on residues serine 635, serine 645, serine 647, serine 655, and serine 657. The span at proline 640 to serine 655 shows a compositional bias: basic residues. The span at threonine 668–glycine 682 shows a compositional bias: basic residues. Positions serine 704–valine 718 are enriched in pro residues. Residues serine 713, serine 714, serine 723, serine 725, serine 731, and serine 733 each carry the phosphoserine modification. Over residues alanine 724–threonine 736 the composition is skewed to polar residues. Threonine 736 is subject to Phosphothreonine. Serine 779, serine 781, serine 789, serine 793, serine 795, serine 797, serine 810, serine 814, serine 816, and serine 818 each carry phosphoserine. The span at serine 779 to proline 800 shows a compositional bias: low complexity. Residue threonine 819 is modified to Phosphothreonine. 2 positions are modified to phosphoserine: serine 822 and serine 832. Positions proline 833–asparagine 842 are enriched in polar residues. The residue at position 834 (threonine 834) is a Phosphothreonine. A phosphoserine mark is found at serine 836, serine 838, and serine 843. Over residues lysine 850–glutamate 875 the composition is skewed to basic residues. Positions valine 878–proline 907 are enriched in low complexity. Threonine 913 carries the phosphothreonine modification. Serine 915 carries the post-translational modification Phosphoserine. Positions aspartate 924–leucine 934 are enriched in basic and acidic residues. Serine 943 bears the Phosphoserine mark.

It belongs to the splicing factor SR family. As to quaternary structure, identified in the spliceosome C complex. Found in a pre-mRNA splicing complex with SFRS4, SFRS5, SNRP70, SNRPA1, SRRM1 and SRRM2. Component of the minor spliceosome, which splices U12-type introns. Found in a pre-mRNA exonic splicing enhancer (ESE) complex with SNRP70, SNRPA1, SRRM1 and TRA2B/SFRS10. Found in a mRNA splicing-dependent exon junction complex (EJC) with DEK, PRPF8, NCBP1, RBM8A, RNPS1, SRRM1 and ALYREF/THOC4. Interacts with DDX39B, CPSF1, RBM8A, RNPS1, and ALYREF/THOC4. Seems to be a compound of RNA export complexes that are released from speckles in a ATP-dependent manner. Post-translationally, citrullinated by PADI4. Phosphorylated on multiple serine and threonine residues by DYRK3 during the G2-to-M transition, after the nuclear-envelope breakdown. Phosphorylation by DYRK3 promotes disassembly of nuclear speckles.

It localises to the nucleus matrix. Its subcellular location is the nucleus speckle. Its function is as follows. Part of pre- and post-splicing multiprotein mRNP complexes. As a component of the minor spliceosome, involved in the splicing of U12-type introns in pre-mRNAs. Involved in numerous pre-mRNA processing events. Promotes constitutive and exonic splicing enhancer (ESE)-dependent splicing activation by bridging together sequence-specific (SR family proteins, SFRS4, SFRS5 and TRA2B/SFRS10) and basal snRNP (SNRP70 and SNRPA1) factors of the spliceosome. Stimulates mRNA 3'-end cleavage independently of the formation of an exon junction complex. Binds both pre-mRNA and spliced mRNA 20-25 nt upstream of exon-exon junctions. Binds RNA and DNA with low sequence specificity and has similar preference for either double- or single-stranded nucleic acid substrates. The sequence is that of Serine/arginine repetitive matrix protein 1 (Srrm1) from Mus musculus (Mouse).